The chain runs to 438 residues: MKPLIALVGRPNVGKSTLFNRILRQKSAIVDPTPGVTRDRHINPGEWQGKQFLLMDTGGYAPENDSLSVAMLDQTMRAIADADAIIFMVDARSGLTYLDLDIAKILKQTFSDKKIFFAINKVDNPQLALEAAAMVRSGFTEPYLISARDGGGVADMLDDILETLPCPESEDEELDDDSIKLAVLGRPNVGKSSLVNALLGTDRQIVSDVPGTTRDAIDSVLKRNGKEYILIDTAGLRKRTKIDPGIEYYSSLRTERAIERCQVALVLLDAQLGLESQDMKIIHMAIERKKGVLILVNKWDLVEKDSKTSKKFTDNLMMQLGNIGYIPIIFTSALTKKNCYRAIDTAAQIAINRRQKISTSNLNRFLQEALAMRHPASKSGKELKIKYMTQIEAGHPVFAFFCNDPQLLENNFKRFLEKRLRESFDFEGLPITMRFLRK.

EngA-type G domains are found at residues 3–168 (PLIA…PCPE) and 179–354 (IKLA…INRR). GTP is bound by residues 9–16 (GRPNVGKS), 56–60 (DTGGY), 120–123 (NKVD), 185–192 (GRPNVGKS), 232–236 (DTAGL), and 297–300 (NKWD). Positions 355 to 438 (QKISTSNLNR…LPITMRFLRK (84 aa)) constitute a KH-like domain.

Belongs to the TRAFAC class TrmE-Era-EngA-EngB-Septin-like GTPase superfamily. EngA (Der) GTPase family. As to quaternary structure, associates with the 50S ribosomal subunit.

In terms of biological role, GTPase that plays an essential role in the late steps of ribosome biogenesis. This Chlorobaculum parvum (strain DSM 263 / NCIMB 8327) (Chlorobium vibrioforme subsp. thiosulfatophilum) protein is GTPase Der.